We begin with the raw amino-acid sequence, 344 residues long: L-rhamnose-proton symporter (344 aa).

10 consecutive transmembrane segments (helical) span residues alanine 4–alanine 24, tryptophan 38–leucine 58, phenylalanine 68–isoleucine 88, methionine 101–isoleucine 121, threonine 131–valine 151, leucine 175–alanine 195, leucine 214–isoleucine 234, isoleucine 259–glycine 279, methionine 290–leucine 310, and valine 321–glycine 341.

It belongs to the L-rhamnose transporter (TC 2.A.7.6) family.

The protein localises to the cell inner membrane. The enzyme catalyses L-rhamnopyranose(in) + H(+)(in) = L-rhamnopyranose(out) + H(+)(out). Its function is as follows. Uptake of L-rhamnose across the cytoplasmic membrane with the concomitant transport of protons into the cell (symport system). This is L-rhamnose-proton symporter from Salmonella typhi.